We begin with the raw amino-acid sequence, 383 residues long: Chorismate synthase (383 aa).

Residues arginine 40 and arginine 46 each coordinate NADP(+). FMN-binding positions include 128 to 130 (RAS), glycine 291, 306 to 310 (KPIPT), and arginine 332.

It belongs to the chorismate synthase family. Homotetramer. The cofactor is FMNH2.

The enzyme catalyses 5-O-(1-carboxyvinyl)-3-phosphoshikimate = chorismate + phosphate. The protein operates within metabolic intermediate biosynthesis; chorismate biosynthesis; chorismate from D-erythrose 4-phosphate and phosphoenolpyruvate: step 7/7. Its function is as follows. Catalyzes the anti-1,4-elimination of the C-3 phosphate and the C-6 proR hydrogen from 5-enolpyruvylshikimate-3-phosphate (EPSP) to yield chorismate, which is the branch point compound that serves as the starting substrate for the three terminal pathways of aromatic amino acid biosynthesis. This reaction introduces a second double bond into the aromatic ring system. The polypeptide is Chorismate synthase (Moorella thermoacetica (strain ATCC 39073 / JCM 9320)).